The following is a 177-amino-acid chain: MATIVRQKGLAPIEETSEVKSFLKERGIDYDHWKVPYNAADLTDKEILADVEKEELLKKLDDRFETLKEKEGYQSRDLIVLHPNVSGLNDMLAKFDRVHYHTDEEVRYIVDGSGVFGFVLKGEKFLVHVVKDDFISVPRNTNHWFYLDDKKRIKAVRYFRDMSGWVPNYVEETNSLD.

4 residues coordinate Fe(2+): His-99, His-101, Glu-105, and His-143. Positions 99, 101, 105, and 143 each coordinate Ni(2+).

The protein belongs to the acireductone dioxygenase (ARD) family. Monomer. The cofactor is Fe(2+). It depends on Ni(2+) as a cofactor.

The catalysed reaction is 1,2-dihydroxy-5-(methylsulfanyl)pent-1-en-3-one + O2 = 3-(methylsulfanyl)propanoate + CO + formate + 2 H(+). It catalyses the reaction 1,2-dihydroxy-5-(methylsulfanyl)pent-1-en-3-one + O2 = 4-methylsulfanyl-2-oxobutanoate + formate + 2 H(+). Its pathway is amino-acid biosynthesis; L-methionine biosynthesis via salvage pathway; L-methionine from S-methyl-5-thio-alpha-D-ribose 1-phosphate: step 5/6. Its function is as follows. Catalyzes 2 different reactions between oxygen and the acireductone 1,2-dihydroxy-3-keto-5-methylthiopentene (DHK-MTPene) depending upon the metal bound in the active site. Fe-containing acireductone dioxygenase (Fe-ARD) produces formate and 2-keto-4-methylthiobutyrate (KMTB), the alpha-ketoacid precursor of methionine in the methionine recycle pathway. Ni-containing acireductone dioxygenase (Ni-ARD) produces methylthiopropionate, carbon monoxide and formate, and does not lie on the methionine recycle pathway. In Leptospira borgpetersenii serovar Hardjo-bovis (strain L550), this protein is Acireductone dioxygenase.